The primary structure comprises 953 residues: Vacuolar membrane protease (953 aa).

Topologically, residues M1 to P16 are cytoplasmic. Residues W17–I37 form a helical membrane-spanning segment. At H38–L382 the chain is on the vacuolar side. N-linked (GlcNAc...) asparagine glycosylation is found at N53 and N115. 2 residues coordinate Zn(2+): H165 and D177. E211 (proton acceptor) is an active-site residue. Zn(2+) contacts are provided by E212, E237, and H310. A helical transmembrane segment spans residues F383–I403. At L404–Y437 the chain is on the cytoplasmic side. Residues P438–F458 form a helical membrane-spanning segment. Residues N459 to H464 lie on the Vacuolar side of the membrane. The chain crosses the membrane as a helical span at residues S465–V485. The Cytoplasmic portion of the chain corresponds to S486–R499. Residues V500–Y520 traverse the membrane as a helical segment. Residues Q521–W524 are Vacuolar-facing. Residues A525–I545 form a helical membrane-spanning segment. Residues S546–Q650 lie on the Cytoplasmic side of the membrane. The interval A570–G599 is disordered. A compositionally biased stretch (acidic residues) spans E581 to P591. The chain crosses the membrane as a helical span at residues F651–G671. Residues S672–L684 lie on the Vacuolar side of the membrane. A helical membrane pass occupies residues F685–V705. The Cytoplasmic portion of the chain corresponds to H706–H711. The helical transmembrane segment at I712–P732 threads the bilayer. Residues F733–A953 are Vacuolar-facing. Residue N779 is glycosylated (N-linked (GlcNAc...) asparagine).

This sequence belongs to the peptidase M28 family. Zn(2+) is required as a cofactor.

It localises to the vacuole membrane. May be involved in vacuolar sorting and osmoregulation. The protein is Vacuolar membrane protease of Emericella nidulans (strain FGSC A4 / ATCC 38163 / CBS 112.46 / NRRL 194 / M139) (Aspergillus nidulans).